The following is a 154-amino-acid chain: Aspartate carbamoyltransferase regulatory chain (154 aa).

4 residues coordinate Zn(2+): Cys-109, Cys-114, Cys-138, and Cys-141.

This sequence belongs to the PyrI family. As to quaternary structure, contains catalytic and regulatory chains. Zn(2+) serves as cofactor.

In terms of biological role, involved in allosteric regulation of aspartate carbamoyltransferase. The polypeptide is Aspartate carbamoyltransferase regulatory chain (Aliivibrio salmonicida (strain LFI1238) (Vibrio salmonicida (strain LFI1238))).